Here is a 682-residue protein sequence, read N- to C-terminus: Tail-specific protease (682 aa).

A signal peptide spans 1–22; that stretch reads MNMFFRLTALAGLLAIAGQTFA. The 85-residue stretch at 238–322 folds into the PDZ domain; it reads NTEMSLSLEG…SKVRLEILPA (85 aa). Active-site charge relay system residues include Ser452, Asp463, and Lys477. Residues 635-650 show a composition bias toward basic and acidic residues; the sequence is GKPELKKLDDLPKDYQ. A disordered region spans residues 635–654; the sequence is GKPELKKLDDLPKDYQEPDP.

It belongs to the peptidase S41A family.

The protein localises to the cell inner membrane. The catalysed reaction is The enzyme shows specific recognition of a C-terminal tripeptide, Xaa-Yaa-Zaa, in which Xaa is preferably Ala or Leu, Yaa is preferably Ala or Tyr, and Zaa is preferably Ala, but then cleaves at a variable distance from the C-terminus. A typical cleavage is -Ala-Ala-|-Arg-Ala-Ala-Lys-Glu-Asn-Tyr-Ala-Leu-Ala-Ala.. Involved in the cleavage of a C-terminal peptide of 11 residues from the precursor form of penicillin-binding protein 3 (PBP3). May be involved in protection of the bacterium from thermal and osmotic stresses. This is Tail-specific protease (prc) from Escherichia coli (strain K12).